Here is a 79-residue protein sequence, read N- to C-terminus: Ribonuclease P protein component 1 (79 aa).

It belongs to the eukaryotic/archaeal RNase P protein component 1 family. In terms of assembly, consists of a catalytic RNA component and at least 4-5 protein subunits.

Its subcellular location is the cytoplasm. It catalyses the reaction Endonucleolytic cleavage of RNA, removing 5'-extranucleotides from tRNA precursor.. Functionally, part of ribonuclease P, a protein complex that generates mature tRNA molecules by cleaving their 5'-ends. This chain is Ribonuclease P protein component 1, found in Saccharolobus solfataricus (strain ATCC 35092 / DSM 1617 / JCM 11322 / P2) (Sulfolobus solfataricus).